We begin with the raw amino-acid sequence, 142 residues long: Nucleoside diphosphate kinase (142 aa).

ATP contacts are provided by Lys-11, Phe-59, Arg-87, Thr-93, Arg-104, and Asn-114. Catalysis depends on His-117, which acts as the Pros-phosphohistidine intermediate.

The protein belongs to the NDK family. In terms of assembly, homotetramer. The cofactor is Mg(2+).

It is found in the cytoplasm. The enzyme catalyses a 2'-deoxyribonucleoside 5'-diphosphate + ATP = a 2'-deoxyribonucleoside 5'-triphosphate + ADP. The catalysed reaction is a ribonucleoside 5'-diphosphate + ATP = a ribonucleoside 5'-triphosphate + ADP. Its function is as follows. Major role in the synthesis of nucleoside triphosphates other than ATP. The ATP gamma phosphate is transferred to the NDP beta phosphate via a ping-pong mechanism, using a phosphorylated active-site intermediate. This Marinobacter nauticus (strain ATCC 700491 / DSM 11845 / VT8) (Marinobacter aquaeolei) protein is Nucleoside diphosphate kinase.